The following is a 921-amino-acid chain: DNA ligase (921 aa).

Residues 90–94 (DAAYD), 139–140 (SL), and Glu173 each bind NAD(+). Residue Lys175 is the N6-AMP-lysine intermediate of the active site. Residues Arg196, Glu235, Lys360, and Lys384 each coordinate NAD(+). Cys481, Cys484, Cys500, and Cys506 together coordinate Zn(2+). A disordered region spans residues 663–688 (EAAIESAETQGGAASETTGAPTGAEA). The BRCT domain occupies 839-921 (SLPQTLAGKT…AQLLETGSID (83 aa)).

It belongs to the NAD-dependent DNA ligase family. LigA subfamily. Requires Mg(2+) as cofactor. The cofactor is Mn(2+).

It carries out the reaction NAD(+) + (deoxyribonucleotide)n-3'-hydroxyl + 5'-phospho-(deoxyribonucleotide)m = (deoxyribonucleotide)n+m + AMP + beta-nicotinamide D-nucleotide.. DNA ligase that catalyzes the formation of phosphodiester linkages between 5'-phosphoryl and 3'-hydroxyl groups in double-stranded DNA using NAD as a coenzyme and as the energy source for the reaction. It is essential for DNA replication and repair of damaged DNA. The protein is DNA ligase of Bifidobacterium longum subsp. infantis (strain ATCC 15697 / DSM 20088 / JCM 1222 / NCTC 11817 / S12).